The chain runs to 398 residues: Acetate kinase (398 aa).

Mg(2+) is bound at residue Asn7. Lys14 serves as a coordination point for ATP. Arg91 lines the substrate pocket. Asp148 acts as the Proton donor/acceptor in catalysis. ATP contacts are provided by residues 208–212 (HLGNG), 283–285 (DFR), and 331–335 (GIGEH). Position 386 (Glu386) interacts with Mg(2+).

Belongs to the acetokinase family. In terms of assembly, homodimer. The cofactor is Mg(2+). Mn(2+) serves as cofactor.

Its subcellular location is the cytoplasm. It catalyses the reaction acetate + ATP = acetyl phosphate + ADP. The protein operates within metabolic intermediate biosynthesis; acetyl-CoA biosynthesis; acetyl-CoA from acetate: step 1/2. In terms of biological role, catalyzes the formation of acetyl phosphate from acetate and ATP. Can also catalyze the reverse reaction. The chain is Acetate kinase from Clostridium botulinum (strain Alaska E43 / Type E3).